A 423-amino-acid polypeptide reads, in one-letter code: L-cysteine:1D-myo-inositol 2-amino-2-deoxy-alpha-D-glucopyranoside ligase (423 aa).

Cys-43 is a Zn(2+) binding site. Residues 43–46 (CGIT), Thr-58, and 81–83 (NVT) contribute to the L-cysteinyl-5'-AMP site. A 'HIGH' region motif is present at residues 45–55 (ITPYDATHMGH). A 'ERGGDP' region motif is present at residues 199–204 (ERGGDP). Trp-240 is a binding site for L-cysteinyl-5'-AMP. Residue Cys-244 coordinates Zn(2+). 262–264 (GSD) is an L-cysteinyl-5'-AMP binding site. His-269 serves as a coordination point for Zn(2+). Val-295 contacts L-cysteinyl-5'-AMP. The short motif at 301 to 305 (KMSKS) is the 'KMSKS' region element.

Belongs to the class-I aminoacyl-tRNA synthetase family. MshC subfamily. As to quaternary structure, monomer. The cofactor is Zn(2+).

The enzyme catalyses 1D-myo-inositol 2-amino-2-deoxy-alpha-D-glucopyranoside + L-cysteine + ATP = 1D-myo-inositol 2-(L-cysteinylamino)-2-deoxy-alpha-D-glucopyranoside + AMP + diphosphate + H(+). Catalyzes the ATP-dependent condensation of GlcN-Ins and L-cysteine to form L-Cys-GlcN-Ins. In Renibacterium salmoninarum (strain ATCC 33209 / DSM 20767 / JCM 11484 / NBRC 15589 / NCIMB 2235), this protein is L-cysteine:1D-myo-inositol 2-amino-2-deoxy-alpha-D-glucopyranoside ligase.